Reading from the N-terminus, the 550-residue chain is Enhanced filamentous growth protein 1 (550 aa).

Disordered regions lie at residues 17–48 (NNGMPQQTTAANQQAFPQQQQPTTTGNASQQQ), 72–95 (QGQPGQQTGQTAGQQQQQQQQQQQ), and 123–182 (QLSQ…QPTP). A compositionally biased stretch (polar residues) spans 123–153 (QLSQPQPQHYNGSNRNYTSAPSGAPIPSNST). Residues Thr-181 and Thr-208 each carry the phosphothreonine modification. One can recognise an HTH APSES-type domain in the interval 206-312 (RVTTTMWEDE…RDIKRVIQTG (107 aa)). Residues 240–261 (GTKLLNVAQMTRGRRDGILKSE) constitute a DNA-binding region (H-T-H motif). Disordered regions lie at residues 329-435 (TSAS…STTN) and 476-550 (SSYP…KEEK). Residues 342-383 (AAATTTAATAISKSSSGNGNSISATSGGSNVSGASGAGSTTS) are compositionally biased toward low complexity. Residues 384–394 (PVNTKAATTAG) are compositionally biased toward polar residues. A compositionally biased stretch (low complexity) spans 395–416 (TPQGNYYQTYNQQQYPQQYGQY). Polar residues predominate over residues 420-435 (GKNQNTPASQPGSTTN). The segment covering 476–502 (SSYPYQQQQQKQQQQQPNQQQQSDQQQ) has biased composition (low complexity). Over residues 514 to 544 (SVHQSPQVQSLTQGSVHPSPQQHQANQSAST) the composition is skewed to polar residues.

It belongs to the EFG1/PHD1/stuA family. Interacts with CZF1 and FLO8. Post-translationally, thr-208 is a phosphorylation target to promote hyphal induction by a subset of environmental cues. Phosphorylation at Thr-181 by the CDc28/HGC1 complex represses cell separation genes and leads to hyphal chain formation.

Its subcellular location is the nucleus. In terms of biological role, transcriptional regulator of the switch between 2 heritable states, the white and opaque states. These 2 cell types differ in many characteristics, including cell structure, mating competence, and virulence. Each state is heritable for many generations, and switching between states occurs stochastically, at low frequency. Antagonizes the action of WOR1, WOR2 and CZF1, and promotes the white state. In white cells, EFG1 represses WOR1 indirectly through WOR2 to maintain white cell identity. Binds target gene promoters at the EFG1 recognition sequence (EGRbox) TATGCATA. Acts as a major regulator of cell wall dynamics and plays a role in interactions with extracellular matrices. Required for TOR1-dependent cellular aggregation and adhesin expression. Required for both normoxic and hypoxic biofilm formation. Hypoxic biofilm formation is a major cause of perseverance and antifungal resistance during infections. Contributes to virulence by regulating hyphal formation and the factors that enable C.albicans to invade and injure endothelial cells. Required for the formation of thick-walled big resting spores called chlamydospores, which survive in unfavorable conditions. Mediates the expression of virulence factors SAP4, SAP5and SAP6 during infection. Involved in drug resistance by regulating the expression of ERG3. The protein is Enhanced filamentous growth protein 1 (EFG1) of Candida albicans (strain SC5314 / ATCC MYA-2876) (Yeast).